We begin with the raw amino-acid sequence, 185 residues long: Ribosome-recycling factor (185 aa).

The protein belongs to the RRF family.

The protein resides in the cytoplasm. In terms of biological role, responsible for the release of ribosomes from messenger RNA at the termination of protein biosynthesis. May increase the efficiency of translation by recycling ribosomes from one round of translation to another. This Haemophilus ducreyi (strain 35000HP / ATCC 700724) protein is Ribosome-recycling factor.